We begin with the raw amino-acid sequence, 399 residues long: Dual-specificity RNA methyltransferase RlmN (399 aa).

The active-site Proton acceptor is Glu122. The 244-residue stretch at 128-371 folds into the Radical SAM core domain; the sequence is ETDRGTLCVS…VRTPRGRDIL (244 aa). Cys135 and Cys374 are oxidised to a cystine. Cys142, Cys146, and Cys149 together coordinate [4Fe-4S] cluster. S-adenosyl-L-methionine is bound by residues 200-201, Ser232, 254-256, and Asn331; these read GE and SLH. Cys374 acts as the S-methylcysteine intermediate in catalysis.

This sequence belongs to the radical SAM superfamily. RlmN family. The cofactor is [4Fe-4S] cluster.

Its subcellular location is the cytoplasm. The enzyme catalyses adenosine(2503) in 23S rRNA + 2 reduced [2Fe-2S]-[ferredoxin] + 2 S-adenosyl-L-methionine = 2-methyladenosine(2503) in 23S rRNA + 5'-deoxyadenosine + L-methionine + 2 oxidized [2Fe-2S]-[ferredoxin] + S-adenosyl-L-homocysteine. It catalyses the reaction adenosine(37) in tRNA + 2 reduced [2Fe-2S]-[ferredoxin] + 2 S-adenosyl-L-methionine = 2-methyladenosine(37) in tRNA + 5'-deoxyadenosine + L-methionine + 2 oxidized [2Fe-2S]-[ferredoxin] + S-adenosyl-L-homocysteine. Its function is as follows. Specifically methylates position 2 of adenine 2503 in 23S rRNA and position 2 of adenine 37 in tRNAs. m2A2503 modification seems to play a crucial role in the proofreading step occurring at the peptidyl transferase center and thus would serve to optimize ribosomal fidelity. In Rhodopseudomonas palustris (strain HaA2), this protein is Dual-specificity RNA methyltransferase RlmN.